A 393-amino-acid polypeptide reads, in one-letter code: Homogentisate phytyltransferase 1, chloroplastic (393 aa).

Residues 1 to 36 (MESLLSSSSLVSAAGGFCWKKQNLKLHSLSEIRVLR) constitute a chloroplast transit peptide. Transmembrane regions (helical) follow at residues 108–128 (TVIG…EKVS), 133–153 (LLFT…IYIV), 170–190 (YLPL…VASF), 205–227 (PLFW…LPLL), 232–252 (FALV…QIAF), 271–291 (LIFA…FKDI), 314–334 (VFWT…LVGA), 338–358 (FIWS…TLWA), and 371–391 (ITSC…LLPF).

It belongs to the UbiA prenyltransferase family.

The protein resides in the plastid. It is found in the chloroplast membrane. The enzyme catalyses phytyl diphosphate + homogentisate + H(+) = 2-methyl-6-phytyl-1,4-benzene-1,4-diol + CO2 + diphosphate. It participates in cofactor biosynthesis; tocopherol biosynthesis. Involved in the synthesis of tocopherol (vitamin E). Catalyzes the condensation of homogentisate and phytyl diphosphate to form dimethylphytylhydrquinone. Low activity with geranylgeranyl diphosphate as substrate, but no activity with farnesyl diphosphate or solanesyl diphosphate. Tocopherol functions to limit lipid oxidation during seed desiccation, quiescence and germination and early seedling development. Protects thylakoid membrane lipids from photooxidation and is required for low-temperature adaptation. In Arabidopsis thaliana (Mouse-ear cress), this protein is Homogentisate phytyltransferase 1, chloroplastic (HPT1).